The sequence spans 69 residues: Brevinin-1CG5 (69 aa).

The signal sequence occupies residues 1–22 (MFTLKKSLLLLFFLGTINLSLC). A propeptide spans 23 to 43 (EQERNAEEERRDDDEMDVEVE) (removed in mature form). C63 and C69 form a disulfide bridge.

The protein belongs to the frog skin active peptide (FSAP) family. Brevinin subfamily. Expressed by the skin glands.

It is found in the secreted. Functionally, antimicrobial peptide active against a variety of Gram-positive and Gram-negative bacterial strains. Has antifungal activity against C.albicans ATCC 10231 and a slime mold isolate. Has hemolytic activity against human erythrocytes. This Amolops chunganensis (Chungan torrent frog) protein is Brevinin-1CG5.